A 1045-amino-acid polypeptide reads, in one-letter code: FERM, ARHGEF and pleckstrin domain-containing protein 1 (1045 aa).

Residues 1–37 (MGEIEQRPTPGSRLGAPENSGISTLERGQKPPPTPSG) form a disordered region. Phosphoserine occurs at positions 20 and 23. Residue Thr24 is modified to Phosphothreonine. The FERM domain maps to 40–320 (VSIKIQMLDD…EHHAFFRLFE (281 aa)). Ser340, Ser373, Ser389, Ser403, Ser418, Ser427, and Ser433 each carry phosphoserine. Residues 361 to 534 (FERKHSKIHS…TDDEDEGRRK (174 aa)) are disordered. Residues 373-396 (SLASQPTELNSEVLEQSQQSTSLT) are compositionally biased toward polar residues. Composition is skewed to polar residues over residues 471 to 489 (TGSL…NSQG) and 496 to 511 (VTLS…QASP). Ser510 and Ser514 each carry phosphoserine. Residues 540 to 730 (KAYFIAKEVS…TEMVAQLHGT (191 aa)) form the DH domain. The PH 1 domain maps to 759 to 856 (EFIRLGSLSK…WVEDIQMAID (98 aa)). Ser833, Ser872, and Ser878 each carry phosphoserine. The tract at residues 864-903 (PAPEFLASSPPDNKSPDEATAADQESEDDLSASRTSLERQ) is disordered. Residue Thr883 is modified to Phosphothreonine. Phosphoserine is present on residues Ser889, Ser896, and Ser899. Positions 932–1029 (ENQLSGNLLR…WMEVIRSATS (98 aa)) constitute a PH 2 domain.

In terms of assembly, interacts with CADM1. Interacts with RAC1. Detected in cAMP-treated chondrocytes, but not in untreated chondrocytes. Detected in fetal brain, heart and spleen, and in adult testis, kidney and lung.

The protein resides in the cell membrane. It localises to the synapse. It is found in the synaptosome. Its subcellular location is the cytoplasm. The protein localises to the cytosol. The protein resides in the cell projection. It localises to the filopodium. It is found in the dendrite. Its subcellular location is the dendritic spine. Functions as a guanine nucleotide exchange factor for RAC1. May play a role in semaphorin signaling. Plays a role in the assembly and disassembly of dendritic filopodia, the formation of dendritic spines, regulation of dendrite length and ultimately the formation of synapses. The chain is FERM, ARHGEF and pleckstrin domain-containing protein 1 (FARP1) from Homo sapiens (Human).